The sequence spans 264 residues: Rhamnosyltransferase WbbL (264 aa).

Belongs to the glycosyltransferase 2 family.

The protein operates within bacterial outer membrane biogenesis; lipopolysaccharide biosynthesis. Its function is as follows. Rhamnosyltransferase involved in lipopolysaccharide biosynthesis. In Escherichia coli (strain K12), this protein is Rhamnosyltransferase WbbL (wbbL).